We begin with the raw amino-acid sequence, 640 residues long: RNA polymerase II elongation factor ELL2 (640 aa).

Disordered regions lie at residues 172–202 (AVSD…STIS), 290–320 (KLNP…PQKR), and 343–490 (RVPP…EEDL). 2 stretches are compositionally biased toward polar residues: residues 184-202 (TPMN…STIS) and 291-318 (LNPS…SSPQ). Residues 360–372 (AAGLPLPPAAAAI) show a composition bias toward low complexity. Residues 391–401 (IVNSNSNSPST) are compositionally biased toward polar residues. Residues 457–470 (MSHKKSKKKSKKHK) are compositionally biased toward basic residues. Basic and acidic residues predominate over residues 471-490 (EKDQIKKHDIETIEEKEEDL). 2 positions are modified to phosphoserine: Ser503 and Ser580. The OCEL domain maps to 526–636 (PDYLIKYIAI…LIGEFDQQQA (111 aa)).

It belongs to the ELL/occludin family. In terms of assembly, component of the super elongation complex (SEC), at least composed of EAF1, EAF2, CDK9, MLLT3/AF9, AFF (AFF1 or AFF4), the P-TEFb complex and ELL (ELL, ELL2 or ELL3). Component of the little elongation complex (LEC), at least composed of ELL (ELL, ELL2 or ELL3), ZC3H8, ICE1 and ICE2. Interacts with AFF4; the interaction is direct and leads to stabilize ELL2 and prevent ELL2 ubiquitination. Interacts with EAF1 and EAF2. Ubiquitinated by SIAH1, leading to its degradation by the proteasome. Interaction with AFF4 stabilizes ELL2 and prevents ELL2 ubiquitination.

The protein resides in the nucleus. In terms of biological role, elongation factor component of the super elongation complex (SEC), a complex required to increase the catalytic rate of RNA polymerase II transcription by suppressing transient pausing by the polymerase at multiple sites along the DNA. Component of the little elongation complex (LEC), a complex required to regulate small nuclear RNA (snRNA) gene transcription by RNA polymerase II and III. Plays a role in immunoglobulin secretion in plasma cells: directs efficient alternative mRNA processing, influencing both proximal poly(A) site choice and exon skipping, as well as immunoglobulin heavy chain (IgH) alternative processing. Probably acts by regulating histone modifications accompanying transition from membrane-specific to secretory IgH mRNA expression. In Homo sapiens (Human), this protein is RNA polymerase II elongation factor ELL2 (ELL2).